Reading from the N-terminus, the 343-residue chain is UDP-3-O-acylglucosamine N-acyltransferase 2 (343 aa).

His-251 functions as the Proton acceptor in the catalytic mechanism.

The protein belongs to the transferase hexapeptide repeat family. LpxD subfamily. In terms of assembly, homotrimer.

It catalyses the reaction a UDP-3-O-[(3R)-3-hydroxyacyl]-alpha-D-glucosamine + a (3R)-hydroxyacyl-[ACP] = a UDP-2-N,3-O-bis[(3R)-3-hydroxyacyl]-alpha-D-glucosamine + holo-[ACP] + H(+). It participates in bacterial outer membrane biogenesis; LPS lipid A biosynthesis. Catalyzes the N-acylation of UDP-3-O-acylglucosamine using 3-hydroxyacyl-ACP as the acyl donor. Is involved in the biosynthesis of lipid A, a phosphorylated glycolipid that anchors the lipopolysaccharide to the outer membrane of the cell. The protein is UDP-3-O-acylglucosamine N-acyltransferase 2 of Legionella pneumophila subsp. pneumophila (strain Philadelphia 1 / ATCC 33152 / DSM 7513).